The primary structure comprises 608 residues: MAQPQPPAYENKNIYATLPRTQRGQPIVLGADPKGKNFLYTNGNSVIIRNIENPAIADVYTEHSCAVNVAKYSPSGFYIASGDASGKIRIWDTVNKEHLLKNEFQPIAGPIKDISWSPDNQRIVAVGEGRERFGHVFMSETGTSVGEISGQSKSINSADFRPARPFRIVTGSEDNTIAVFEGPPFKFKMTKQDHSRFVQAVRYSPDGKFFASAGFDGKVFLYDGTSSELVGEFGSPAHKGGVYALAWKPDSTQLLTCSGDKTCRLWTVESRELVSEFVMGTTVDDQQVSCLWQGDNLITVSLSGVITYLNVADPSKPLRVVKGHNKPITVLGLSDDRSTIYTGSHDGVVTNWNSGSGTNDRITGTGHGNQINGIAAWGDFVYTCGIDDSLRQFSVEGNSYTDYVVKLNCQPRGLAILRNENIIALACIKELTLVQDQKKIFSLPIKYEASSIAVNADTSDVAVGGDDQKLHIYTLKGGVLEPKVELDHLGAVTDVSYSPDLKYLVACDAHRKVVLYSVEEYKPAHNKEWGFHSARVNTVAWSPNSLLVASGSLDTTIIIWSVANPAKHTIIKNAHPQSQITRLVWLDNNTVISTGQDCNTKVWHVENI.

WD repeat units follow at residues 62–101 (EHSCAVNVAKYSPSGFYIASGDASGKIRIWDTVNKEHLLK), 106–149 (PIAG…GEIS), 150–190 (GQSK…FKMT), 193–232 (DHSRFVQAVRYSPDGKFFASAGFDGKVFLYDGTSSELVGE), 237–276 (AHKGGVYALAWKPDSTQLLTCSGDKTCRLWTVESRELVSE), 323–362 (GHNKPITVLGLSDDRSTIYTGSHDGVVTNWNSGSGTNDRI), 366–403 (GHGNQINGIAAWGDFVYTCGIDDSLRQFSVEGNSYTDY), 444–483 (PIKYEASSIAVNADTSDVAVGGDDQKLHIYTLKGGVLEPK), 487–526 (DHLGAVTDVSYSPDLKYLVACDAHRKVVLYSVEEYKPAHN), 531–570 (FHSARVNTVAWSPNSLLVASGSLDTTIIIWSVANPAKHTI), and 575–607 (HPQSQITRLVWLDNNTVISTGQDCNTKVWHVEN).

This sequence belongs to the WD repeat AIP1 family. In terms of tissue distribution, expressed in pupal wing cells.

The protein resides in the cytoplasm. Its subcellular location is the cytoskeleton. In terms of biological role, induces disassembly of actin filaments in conjunction with ADF/cofilin family proteins. Together with GMF, promotes Arp2/3-nucleated actin filament array disassembly. Essential for organismal and cell viability. Required for the development of normal wing cell planar polarity. In egg chambers and together with GMF, plays an important role in directional migration of border cell clusters. The protein is Actin-interacting protein 1 (flr) of Drosophila melanogaster (Fruit fly).